A 376-amino-acid polypeptide reads, in one-letter code: Homeobox protein extradenticle (376 aa).

The interval 16–35 (APQGYSLSGQDDGQNTGNEN) is disordered. The span at 20 to 34 (YSLSGQDDGQNTGNE) shows a compositional bias: polar residues. One can recognise a PBC domain in the interval 38–237 (RKQKDIGEIL…VMILRSRFLD (200 aa)). The interval 45–124 (EILQQIMSIS…EGVAGPEKGG (80 aa)) is PBC-A. Positions 127–237 (AAAASAAAAS…VMILRSRFLD (111 aa)) are PBC-B. A DNA-binding region (homeobox; TALE-type) is located at residues 238 to 300 (ARRKRRNFSK…NKRIRYKKNI (63 aa)). A compositionally biased stretch (low complexity) spans 318–335 (ASPYSMAGPPSGTTTPMM). Residues 318 to 376 (ASPYSMAGPPSGTTTPMMSPAPPQDSMGYTMGSGGYDQQQPYDNSMGGYDPNLHQDLSP) form a disordered region.

Belongs to the TALE/PBX homeobox family. In terms of assembly, interacts with Ubx and hth.

The protein resides in the nucleus. Transcription factor which acts with the selector homeodomain proteins altering the regulation of downstream target genes such as wingless (wg), teashirt (tsh) and decapentaplegic (dpp), thus affecting segmental identity. Delimits the eye field and prevent inappropriate eye development. Required for proper localization of chordotonal organs within the peripheral nervous system. In Drosophila pseudoobscura pseudoobscura (Fruit fly), this protein is Homeobox protein extradenticle.